We begin with the raw amino-acid sequence, 52 residues long: Lysis protein for colicin N (52 aa).

Residues 1–17 (MCGKILLILFFIMTLSA) form the signal peptide. A lipid anchor (N-palmitoyl cysteine) is attached at Cys18. Cys18 carries S-diacylglycerol cysteine lipidation.

It localises to the cell outer membrane. Lysis proteins are required for both colicin release and partial cell lysis. This is Lysis protein for colicin N (cnl) from Escherichia coli.